The sequence spans 101 residues: Small ribosomal subunit protein uS14A (101 aa).

2 disordered regions span residues 1 to 20 and 28 to 72; these read MAKKSKIAKNDRRQETVARY and TEII…RPRG. 2 stretches are compositionally biased toward basic and acidic residues: residues 38–53 and 61–70; these read EAERRAAQQELRRQPR and RNRDSVDGRP.

It belongs to the universal ribosomal protein uS14 family. Part of the 30S ribosomal subunit. Contacts proteins S3 and S10.

Its function is as follows. Binds 16S rRNA, required for the assembly of 30S particles and may also be responsible for determining the conformation of the 16S rRNA at the A site. This chain is Small ribosomal subunit protein uS14A, found in Streptomyces avermitilis (strain ATCC 31267 / DSM 46492 / JCM 5070 / NBRC 14893 / NCIMB 12804 / NRRL 8165 / MA-4680).